We begin with the raw amino-acid sequence, 353 residues long: Photosystem II D2 protein (353 aa).

Thr2 is subject to N-acetylthreonine. A Phosphothreonine modification is found at Thr2. Residues 41-61 (CAYFALGGWFTGTTFVTSWYT) form a helical membrane-spanning segment. His118 is a chlorophyll a binding site. The helical transmembrane segment at 125–141 (GFMLRQFELARSVQLRP) threads the bilayer. 2 residues coordinate pheophytin a: Gln130 and Asn143. Residues 153–166 (VFVSVFLIYPLGQS) form a helical membrane-spanning segment. His198 provides a ligand contact to chlorophyll a. The chain crosses the membrane as a helical span at residues 208–228 (AALLCAIHGATVENTLFEDGD). A plastoquinone-binding residues include His215 and Phe262. His215 contributes to the Fe cation binding site. Residue His269 participates in Fe cation binding. The helical transmembrane segment at 279–295 (GLWMSAIGVVGLALNLR) threads the bilayer.

It belongs to the reaction center PufL/M/PsbA/D family. As to quaternary structure, PSII is composed of 1 copy each of membrane proteins PsbA, PsbB, PsbC, PsbD, PsbE, PsbF, PsbH, PsbI, PsbJ, PsbK, PsbL, PsbM, PsbT, PsbX, PsbY, PsbZ, Psb30/Ycf12, at least 3 peripheral proteins of the oxygen-evolving complex and a large number of cofactors. It forms dimeric complexes. The D1/D2 heterodimer binds P680, chlorophylls that are the primary electron donor of PSII, and subsequent electron acceptors. It shares a non-heme iron and each subunit binds pheophytin, quinone, additional chlorophylls, carotenoids and lipids. There is also a Cl(-1) ion associated with D1 and D2, which is required for oxygen evolution. The PSII complex binds additional chlorophylls, carotenoids and specific lipids. serves as cofactor.

It localises to the plastid. The protein localises to the chloroplast thylakoid membrane. The catalysed reaction is 2 a plastoquinone + 4 hnu + 2 H2O = 2 a plastoquinol + O2. Its function is as follows. Photosystem II (PSII) is a light-driven water:plastoquinone oxidoreductase that uses light energy to abstract electrons from H(2)O, generating O(2) and a proton gradient subsequently used for ATP formation. It consists of a core antenna complex that captures photons, and an electron transfer chain that converts photonic excitation into a charge separation. The D1/D2 (PsbA/PsbD) reaction center heterodimer binds P680, the primary electron donor of PSII as well as several subsequent electron acceptors. D2 is needed for assembly of a stable PSII complex. This is Photosystem II D2 protein from Cycas taitungensis (Prince sago).